The chain runs to 485 residues: Cysteine--tRNA ligase (485 aa).

Cys-28 is a Zn(2+) binding site. Positions 30-40 (MTVYDYCHLGH) match the 'HIGH' region motif. Residues Cys-212, His-237, and Glu-241 each contribute to the Zn(2+) site. The 'KMSKS' region motif lies at 269–273 (KMSKS). An ATP-binding site is contributed by Lys-272.

The protein belongs to the class-I aminoacyl-tRNA synthetase family. Monomer. Zn(2+) serves as cofactor.

The protein localises to the cytoplasm. The catalysed reaction is tRNA(Cys) + L-cysteine + ATP = L-cysteinyl-tRNA(Cys) + AMP + diphosphate. This is Cysteine--tRNA ligase from Bordetella bronchiseptica (strain ATCC BAA-588 / NCTC 13252 / RB50) (Alcaligenes bronchisepticus).